The following is a 282-amino-acid chain: MSKLLSYTARIILRNSRITVRQLVRGFAGFVSGQRNAPQPAYGRPVPGLLRQKMVSSIGKRSMFIQTQDTPNPDSLKFLPGVEVLGKGNTYDFPSGTAAHCSPLAKLLFRVEGVRAVFFGSDFITISKEESAEWSLIKPEVFAVIMDFFASGLPILHEARPNADTEILDDDDETVMMIKELLDTRIRPTVQEDGGDIVFISYENGVVKLKMQGSCSSCPSSIVTLKNGVQNMLQFYIPEVESVEQVFDDADRMADKEFERFEKNLKQKEPAGAPVGIGGGPN.

Residues 1-27 (MSKLLSYTARIILRNSRITVRQLVRGF) constitute a mitochondrion transit peptide. The nifU stretch occupies residues 178-246 (IKELLDTRIR…IPEVESVEQV (69 aa)). C215 and C218 together coordinate [4Fe-4S] cluster. The interval 263–282 (KNLKQKEPAGAPVGIGGGPN) is disordered.

The protein belongs to the NifU family.

It is found in the mitochondrion. Molecular scaffold for [Fe-S] cluster assembly of mitochondrial iron-sulfur proteins. The chain is NFU1 iron-sulfur cluster scaffold homolog, mitochondrial from Drosophila persimilis (Fruit fly).